The sequence spans 390 residues: Putative transposase YncI (390 aa).

The protein belongs to the transposase 11 family.

This Escherichia coli O157:H7 protein is Putative transposase YncI (yncI).